The chain runs to 266 residues: Tryptophan synthase alpha chain (266 aa).

Residues Glu46 and Asp57 each act as proton acceptor in the active site.

The protein belongs to the TrpA family. Tetramer of two alpha and two beta chains.

The enzyme catalyses (1S,2R)-1-C-(indol-3-yl)glycerol 3-phosphate + L-serine = D-glyceraldehyde 3-phosphate + L-tryptophan + H2O. It functions in the pathway amino-acid biosynthesis; L-tryptophan biosynthesis; L-tryptophan from chorismate: step 5/5. Its function is as follows. The alpha subunit is responsible for the aldol cleavage of indoleglycerol phosphate to indole and glyceraldehyde 3-phosphate. The chain is Tryptophan synthase alpha chain from Lacticaseibacillus casei (Lactobacillus casei).